The sequence spans 86 residues: uncharacterized protein (86 aa).

This is an uncharacterized protein from Haemophilus phage HP1 (strain HP1c1) (Bacteriophage HP1).